We begin with the raw amino-acid sequence, 494 residues long: Amidophosphoribosyltransferase (494 aa).

A propeptide spanning residues 1–10 is cleaved from the precursor; sequence MSNYSGLNEE. The active-site Nucleophile is Cys-11. Residues 11–231 form the Glutamine amidotransferase type-2 domain; that stretch reads CGVFGIWNHP…AGEYVVITDE (221 aa). 3 residues coordinate Mg(2+): Ser-294, Asp-356, and Asp-357.

In the C-terminal section; belongs to the purine/pyrimidine phosphoribosyltransferase family. It depends on Mg(2+) as a cofactor.

The enzyme catalyses 5-phospho-beta-D-ribosylamine + L-glutamate + diphosphate = 5-phospho-alpha-D-ribose 1-diphosphate + L-glutamine + H2O. It participates in purine metabolism; IMP biosynthesis via de novo pathway; N(1)-(5-phospho-D-ribosyl)glycinamide from 5-phospho-alpha-D-ribose 1-diphosphate: step 1/2. In terms of biological role, catalyzes the formation of phosphoribosylamine from phosphoribosylpyrophosphate (PRPP) and glutamine. The chain is Amidophosphoribosyltransferase from Staphylococcus epidermidis (strain ATCC 35984 / DSM 28319 / BCRC 17069 / CCUG 31568 / BM 3577 / RP62A).